Consider the following 142-residue polypeptide: Acidic phospholipase A2 KBf-grIB (142 aa).

Intrachain disulfides connect cysteine 28–cysteine 94, cysteine 44–cysteine 141, cysteine 46–cysteine 62, cysteine 61–cysteine 122, cysteine 68–cysteine 115, cysteine 78–cysteine 108, and cysteine 101–cysteine 113. The Ca(2+) site is built by tyrosine 45, glycine 47, and glycine 49. Histidine 65 is an active-site residue. Aspartate 66 provides a ligand contact to Ca(2+). Residue aspartate 116 is part of the active site.

It belongs to the phospholipase A2 family. Group I subfamily. D49 sub-subfamily. Ca(2+) is required as a cofactor. As to expression, expressed by the venom gland.

It is found in the secreted. It carries out the reaction a 1,2-diacyl-sn-glycero-3-phosphocholine + H2O = a 1-acyl-sn-glycero-3-phosphocholine + a fatty acid + H(+). In terms of biological role, PLA2 catalyzes the calcium-dependent hydrolysis of the 2-acyl groups in 3-sn-phosphoglycerides. The protein is Acidic phospholipase A2 KBf-grIB of Bungarus fasciatus (Banded krait).